A 229-amino-acid polypeptide reads, in one-letter code: NAD-dependent protein deacetylase (229 aa).

One can recognise a Deacetylase sirtuin-type domain in the interval M1–I229. NAD(+) is bound by residues A20, R32, Q96, I98, D99, H114, T181, S182, N205, and V223. Residues I98 and D99 each coordinate nicotinamide. H114 (proton acceptor) is an active-site residue.

Belongs to the sirtuin family. Class U subfamily.

It is found in the cytoplasm. The catalysed reaction is N(6)-acetyl-L-lysyl-[protein] + NAD(+) + H2O = 2''-O-acetyl-ADP-D-ribose + nicotinamide + L-lysyl-[protein]. Functionally, NAD-dependent protein deacetylase which modulates the activities of several enzymes which are inactive in their acetylated form. The polypeptide is NAD-dependent protein deacetylase (Listeria innocua serovar 6a (strain ATCC BAA-680 / CLIP 11262)).